The following is a 119-amino-acid chain: Large ribosomal subunit protein uL14 (119 aa).

This sequence belongs to the universal ribosomal protein uL14 family. As to quaternary structure, part of the 50S ribosomal subunit. Forms a cluster with proteins L3 and L19. In the 70S ribosome, L14 and L19 interact and together make contacts with the 16S rRNA in bridges B5 and B8.

Binds to 23S rRNA. Forms part of two intersubunit bridges in the 70S ribosome. In Anaplasma phagocytophilum (strain HZ), this protein is Large ribosomal subunit protein uL14.